Consider the following 117-residue polypeptide: Large ribosomal subunit protein bL20 (117 aa).

Belongs to the bacterial ribosomal protein bL20 family.

Its function is as follows. Binds directly to 23S ribosomal RNA and is necessary for the in vitro assembly process of the 50S ribosomal subunit. It is not involved in the protein synthesizing functions of that subunit. The protein is Large ribosomal subunit protein bL20 of Roseiflexus sp. (strain RS-1).